The chain runs to 648 residues: MTRSEKTRHFGNQNYEKLRKICIKKKQPFVDTLFPPTNQSLFLEQRQSSDIVWKRPGELHPDPHLFVEGASPNDVTQGILGNCWFVSACSALTHNFKLLAQVIPDADDQEWSTKHAYAGIFRFRFWRFGKWVEVVIDDLLPTRDGKLLFARSKTPNEFWSALLEKAFAKLYGCYENLVGGHLSDALQDVSGGVAETLHVRKFLKDDPNDTELKLFNDLKTAFDKGALVVAAIAARTKEEIEESLDCGLVKGHAYAVSAVCTIDVTNPNERSFTSFIMGSKRKQNLIRLQNPWGEKEWNGAWSDDSPEWQNVSASQLSTMGVQPANSDSDDGDFWMPWESFVHYFTDISLCQLFNTSVFSFSRSYDEQIVFSEWTTNGKKSGAPDDRAGGCHNFKATFCNNPQYIFDIPSPNCSVMFALIQNDPSEGLKKREPFVTIGMHVMKVENNRQYRVHTAMHPIAISDYASGRSVYLHLQSLPRGRYLLIPTTFAPKEQTLFMLRVYSDEHIHFSPLTKHAPKLGLLKCKSAQSVTRLTIHGVDFNSASTGTHNVYAILKDSRKSFRTKTLSGVKSIQWDEQFLFHKSKNRQQYKIEVWEDRKMARDHLLAQSVIIALIDNENRDTTLQLTDPRGTVIGTVSVTVSAFDDPMYL.

The Calpain catalytic domain occupies 28–353; sequence PFVDTLFPPT…FTDISLCQLF (326 aa). Catalysis depends on residues Cys83, His252, and Asn290. The segment at 354 to 509 is domain III; sequence NTSVFSFSRS…VYSDEHIHFS (156 aa). Positions 502–625 constitute a C2 domain; the sequence is SDEHIHFSPL…ENRDTTLQLT (124 aa).

Belongs to the peptidase C2 family. Ca(2+) serves as cofactor. In terms of tissue distribution, expressed in neuronal, but not in GABA-ergic neurons, intestinal, hypodermal and excretory tissues.

Required for the correct female sexual development of the soma and germline in hermaphrodite animals, while being fully dispensable in males. Has calcium-dependent proteolytic activity and is involved in the cleavage of tra-2, for which it acts as a potentiator. Capable of calcium-dependent autolysis. Part of the necrosis cell death pathway. Required for necrosis of intestinal cells induced by B.thuringiensis endotoxin Cry6Aa. In Caenorhabditis elegans, this protein is Calpain-5.